A 391-amino-acid polypeptide reads, in one-letter code: tRNA (cytosine(38)-C(5))-methyltransferase (391 aa).

The SAM-dependent MTase C5-type domain occupies 4 to 391 (LRVLELYSGI…VSKLLTVLCE (388 aa)). Residues 13 to 15 (IGG), aspartate 34, 57 to 58 (IE), and serine 76 each bind S-adenosyl-L-methionine. Cysteine 79 is an active-site residue. S-adenosyl-L-methionine is bound at residue serine 376.

The protein belongs to the class I-like SAM-binding methyltransferase superfamily. C5-methyltransferase family.

The protein localises to the cytoplasm. The enzyme catalyses cytidine(38) in tRNA + S-adenosyl-L-methionine = 5-methylcytidine(38) in tRNA + S-adenosyl-L-homocysteine + H(+). Its function is as follows. Specifically methylates cytosine 38 in the anticodon loop of tRNA(Asp). Has higher activity on tRNA(Asp) modified with queuosine at position 34. This chain is tRNA (cytosine(38)-C(5))-methyltransferase (Trdmt1), found in Rattus norvegicus (Rat).